We begin with the raw amino-acid sequence, 75 residues long: uncharacterized protein (75 aa).

2 helical membrane passes run 5 to 25 (VIICLLFTYYVIWSLLPIFEI) and 42 to 62 (VAIFLPIFLLLIGFTLTGSVL).

It is found in the membrane. This is an uncharacterized protein from Saccharomyces cerevisiae (strain ATCC 204508 / S288c) (Baker's yeast).